A 64-amino-acid chain; its full sequence is Sperm protamine P1 (64 aa).

The segment at 1 to 64 (MARYRHSRSR…SRRRRRRYYY (64 aa)) is disordered.

This sequence belongs to the protamine P1 family. Testis.

It localises to the nucleus. It is found in the chromosome. Functionally, protamines substitute for histones in the chromatin of sperm during the haploid phase of spermatogenesis. They compact sperm DNA into a highly condensed, stable and inactive complex. The protein is Sperm protamine P1 (PRM1) of Hypsiprymnodon moschatus (Musky rat kangaroo).